The chain runs to 643 residues: Fructose-1,6-bisphosphatase class 3 (643 aa).

The protein belongs to the FBPase class 3 family. Mn(2+) is required as a cofactor.

The catalysed reaction is beta-D-fructose 1,6-bisphosphate + H2O = beta-D-fructose 6-phosphate + phosphate. Its pathway is carbohydrate biosynthesis; gluconeogenesis. In Lacticaseibacillus paracasei (strain ATCC 334 / BCRC 17002 / CCUG 31169 / CIP 107868 / KCTC 3260 / NRRL B-441) (Lactobacillus paracasei), this protein is Fructose-1,6-bisphosphatase class 3.